The primary structure comprises 427 residues: Adenylosuccinate synthetase (427 aa).

Residues glycine 12–lysine 18 and glycine 40–threonine 42 each bind GTP. Aspartate 13 acts as the Proton acceptor in catalysis. The Mg(2+) site is built by aspartate 13 and glycine 40. IMP-binding positions include aspartate 13–lysine 16, asparagine 38–histidine 41, threonine 128, arginine 142, glutamine 223, threonine 238, and arginine 302. Histidine 41 (proton donor) is an active-site residue. Threonine 298 to arginine 304 contacts substrate. GTP-binding positions include arginine 304, lysine 330–aspartate 332, and alanine 412–glycine 414.

Belongs to the adenylosuccinate synthetase family. As to quaternary structure, homodimer. It depends on Mg(2+) as a cofactor.

The protein resides in the cytoplasm. The enzyme catalyses IMP + L-aspartate + GTP = N(6)-(1,2-dicarboxyethyl)-AMP + GDP + phosphate + 2 H(+). It participates in purine metabolism; AMP biosynthesis via de novo pathway; AMP from IMP: step 1/2. Functionally, plays an important role in the de novo pathway of purine nucleotide biosynthesis. Catalyzes the first committed step in the biosynthesis of AMP from IMP. This is Adenylosuccinate synthetase from Moorella thermoacetica (strain ATCC 39073 / JCM 9320).